A 539-amino-acid polypeptide reads, in one-letter code: Phosphoenolpyruvate carboxykinase (ATP) (539 aa).

Positions 61, 195, and 201 each coordinate substrate. Residues K201, H220, and 238–246 (GLSGTGKTT) each bind ATP. Mn(2+) is bound by residues K201 and H220. D259 provides a ligand contact to Mn(2+). E287, R325, and T450 together coordinate ATP. R325 serves as a coordination point for substrate.

The protein belongs to the phosphoenolpyruvate carboxykinase (ATP) family. Mn(2+) serves as cofactor.

The protein localises to the cytoplasm. It carries out the reaction oxaloacetate + ATP = phosphoenolpyruvate + ADP + CO2. It participates in carbohydrate biosynthesis; gluconeogenesis. Involved in the gluconeogenesis. Catalyzes the conversion of oxaloacetate (OAA) to phosphoenolpyruvate (PEP) through direct phosphoryl transfer between the nucleoside triphosphate and OAA. The sequence is that of Phosphoenolpyruvate carboxykinase (ATP) from Methylorubrum extorquens (strain CM4 / NCIMB 13688) (Methylobacterium extorquens).